Here is a 454-residue protein sequence, read N- to C-terminus: ESX-1 secretion-associated protein EspB (454 aa).

3 disordered regions span residues 17–40, 82–128, and 391–454; these read RADE…SGLT, GEVE…AGES, and AGQG…QDNK. Positions 391–422 are enriched in gly residues; sequence AGQGGGAAGRGMAGGGMGMPMGGAGQGQGGAK.

Belongs to the EspB family. In terms of processing, cleaved at close to the C-terminus during secretion.

It localises to the secreted. This Mycobacterium marinum (strain ATCC BAA-535 / M) protein is ESX-1 secretion-associated protein EspB.